Consider the following 651-residue polypeptide: Acetyl-coenzyme A synthetase (651 aa).

Residues 189 to 192 (RGGK), Thr-311, and Asn-335 each bind CoA. ATP contacts are provided by residues 387–389 (GEP), 411–416 (DTWWQT), Asp-500, and Arg-515. Ser-523 serves as a coordination point for CoA. Arg-526 serves as a coordination point for ATP. Val-537, His-539, and Val-542 together coordinate Mg(2+). Arg-586 is a CoA binding site. Lys-611 is subject to N6-acetyllysine.

This sequence belongs to the ATP-dependent AMP-binding enzyme family. It depends on Mg(2+) as a cofactor. In terms of processing, acetylated. Deacetylation by the SIR2-homolog deacetylase activates the enzyme.

The enzyme catalyses acetate + ATP + CoA = acetyl-CoA + AMP + diphosphate. Catalyzes the conversion of acetate into acetyl-CoA (AcCoA), an essential intermediate at the junction of anabolic and catabolic pathways. AcsA undergoes a two-step reaction. In the first half reaction, AcsA combines acetate with ATP to form acetyl-adenylate (AcAMP) intermediate. In the second half reaction, it can then transfer the acetyl group from AcAMP to the sulfhydryl group of CoA, forming the product AcCoA. The chain is Acetyl-coenzyme A synthetase from Brucella abortus (strain S19).